A 499-amino-acid polypeptide reads, in one-letter code: Protein singed wings 2 (499 aa).

The N-terminal stretch at 1–29 is a signal peptide; it reads MPSGVFQKRPKAAETISLFCMILIRLSRA. LRR repeat units lie at residues 154-175 and 178-199; these read ELHT…TFKR and PLKV…LLLP. Positions 210-265 constitute an LRRCT 1 domain; that stretch reads NPWNCTRNFKWLLLQPEKGRLVVDRDELICTDRKYKERQMLMVMHYKLELKRQCQS. 3 LRR repeats span residues 307 to 328, 332 to 353, and 357 to 378; these read NTTT…RDNP, HVVD…EDTY, and NFRL…ALDN. Positions 394 to 449 constitute an LRRCT 2 domain; sequence NPWHCTCKFGSRMRELLTKYKDIVRDAWNVSCTYRLDDDQLLAKVLTLSRQEMCNL.

Functionally, has a role in the ecdysone induced cascade; probably indirect control of 'late' ecdysone genes. In Drosophila melanogaster (Fruit fly), this protein is Protein singed wings 2.